Here is a 373-residue protein sequence, read N- to C-terminus: Anhydro-N-acetylmuramic acid kinase (373 aa).

12–19 (GTSLDGVD) is a binding site for ATP.

It belongs to the anhydro-N-acetylmuramic acid kinase family.

It carries out the reaction 1,6-anhydro-N-acetyl-beta-muramate + ATP + H2O = N-acetyl-D-muramate 6-phosphate + ADP + H(+). Its pathway is amino-sugar metabolism; 1,6-anhydro-N-acetylmuramate degradation. The protein operates within cell wall biogenesis; peptidoglycan recycling. Catalyzes the specific phosphorylation of 1,6-anhydro-N-acetylmuramic acid (anhMurNAc) with the simultaneous cleavage of the 1,6-anhydro ring, generating MurNAc-6-P. Is required for the utilization of anhMurNAc either imported from the medium or derived from its own cell wall murein, and thus plays a role in cell wall recycling. In Salmonella gallinarum (strain 287/91 / NCTC 13346), this protein is Anhydro-N-acetylmuramic acid kinase.